The sequence spans 330 residues: uncharacterized protein (330 aa).

Disordered stretches follow at residues 136–160 and 172–314; these read VPPS…DESS and DNEK…SQFN. Positions 223-235 are enriched in pro residues; the sequence is PKPPAPPPPPPVP. Low complexity predominate over residues 236-246; that stretch reads ISMTPAAISVT. 3 stretches are compositionally biased toward polar residues: residues 263–276, 284–294, and 304–314; these read AQST…TTDE, TRSSSQSNSTV, and PASSPTFSQFN.

This is an uncharacterized protein from Danio rerio (Zebrafish).